The primary structure comprises 122 residues: Large ribosomal subunit protein uL14 (122 aa).

This sequence belongs to the universal ribosomal protein uL14 family. As to quaternary structure, part of the 50S ribosomal subunit. Forms a cluster with proteins L3 and L19. In the 70S ribosome, L14 and L19 interact and together make contacts with the 16S rRNA in bridges B5 and B8.

In terms of biological role, binds to 23S rRNA. Forms part of two intersubunit bridges in the 70S ribosome. The protein is Large ribosomal subunit protein uL14 of Chlamydia pneumoniae (Chlamydophila pneumoniae).